The chain runs to 124 residues: Small ribosomal subunit protein uS12 (124 aa).

D89 is modified (3-methylthioaspartic acid). The disordered stretch occupies residues 105 to 124 (AGVKDRKKGRSKYGAKRPKA). Over residues 109–124 (DRKKGRSKYGAKRPKA) the composition is skewed to basic residues.

The protein belongs to the universal ribosomal protein uS12 family. In terms of assembly, part of the 30S ribosomal subunit. Contacts proteins S8 and S17. May interact with IF1 in the 30S initiation complex.

Functionally, with S4 and S5 plays an important role in translational accuracy. Interacts with and stabilizes bases of the 16S rRNA that are involved in tRNA selection in the A site and with the mRNA backbone. Located at the interface of the 30S and 50S subunits, it traverses the body of the 30S subunit contacting proteins on the other side and probably holding the rRNA structure together. The combined cluster of proteins S8, S12 and S17 appears to hold together the shoulder and platform of the 30S subunit. In Dichelobacter nodosus (strain VCS1703A), this protein is Small ribosomal subunit protein uS12.